The primary structure comprises 437 residues: tRNA-2-methylthio-N(6)-dimethylallyladenosine synthase (437 aa).

The 118-residue stretch at R3–T120 folds into the MTTase N-terminal domain. Positions 12, 49, 83, 157, 161, and 164 each coordinate [4Fe-4S] cluster. Residues R143–E370 form the Radical SAM core domain. The TRAM domain occupies R373–S437.

It belongs to the methylthiotransferase family. MiaB subfamily. Monomer. [4Fe-4S] cluster serves as cofactor.

The protein resides in the cytoplasm. The enzyme catalyses N(6)-dimethylallyladenosine(37) in tRNA + (sulfur carrier)-SH + AH2 + 2 S-adenosyl-L-methionine = 2-methylsulfanyl-N(6)-dimethylallyladenosine(37) in tRNA + (sulfur carrier)-H + 5'-deoxyadenosine + L-methionine + A + S-adenosyl-L-homocysteine + 2 H(+). In terms of biological role, catalyzes the methylthiolation of N6-(dimethylallyl)adenosine (i(6)A), leading to the formation of 2-methylthio-N6-(dimethylallyl)adenosine (ms(2)i(6)A) at position 37 in tRNAs that read codons beginning with uridine. This is tRNA-2-methylthio-N(6)-dimethylallyladenosine synthase from Stutzerimonas stutzeri (strain A1501) (Pseudomonas stutzeri).